We begin with the raw amino-acid sequence, 170 residues long: Transcriptional repressor NrdR (170 aa).

A zinc finger lies at 3-34 (CPFCRHPDSRVVDSRTSEDGSSIRRRRQCPEC). In terms of domain architecture, ATP-cone spans 46-136 (LSVVKRSGVA…VYRGFSSLED (91 aa)). Residues 148 to 170 (RENEGDPDADGSADAPVRLTTSV) form a disordered region.

Belongs to the NrdR family. Zn(2+) serves as cofactor.

Negatively regulates transcription of bacterial ribonucleotide reductase nrd genes and operons by binding to NrdR-boxes. This Beutenbergia cavernae (strain ATCC BAA-8 / DSM 12333 / CCUG 43141 / JCM 11478 / NBRC 16432 / NCIMB 13614 / HKI 0122) protein is Transcriptional repressor NrdR.